The following is a 261-amino-acid chain: Carbonic anhydrase 1 (261 aa).

The disordered stretch occupies residues 1-31 (MASPDWGYDDKNGPEQWSKLYPIANGNNQSP). Ala2 carries the N-acetylalanine modification. Residues 4 to 261 (PDWGYDDKNG…LKGRTVRASF (258 aa)) enclose the Alpha-carbonic anhydrase domain. Residue His65 is the Proton donor/acceptor of the active site. Zn(2+) is bound by residues His65, His68, His95, His97, and His120. Substrate-binding positions include Thr200 and 200–201 (TH). Residue His201 coordinates Zn(2+). Residues 241 to 261 (PMQHNNRPTQPLKGRTVRASF) form a disordered region.

Belongs to the alpha-carbonic anhydrase family. It depends on Zn(2+) as a cofactor.

It is found in the cytoplasm. It catalyses the reaction hydrogencarbonate + H(+) = CO2 + H2O. The catalysed reaction is urea = cyanamide + H2O. With respect to regulation, activated by histamine, imidazole, L-adrenaline, L- and D-histidine, and L- and D-phenylalanine. Inhibited by coumarins, sulfonamide derivatives such as acetazolamide, benzenesulfonamide and derivatives (4-carboxyethylbenzene-sulfonamide, 4-carboxyethylbenzene-sulfonamide ethyl ester, 4-(acetyl-2-aminoethyl)benzene-sulfonamide, 4-aminoethylbenzene-sulfonamide), and 'prong inhibitors' BR15, BR17, BR22 and BR30. Activated by a short exposition to Foscarnet (phosphonoformate trisodium salt), but inhibited by a long one. Esterase activity weakly reduced by cyanamide. Catalyzes the reversible hydration of carbon dioxide. Can hydrate cyanamide to urea. The protein is Carbonic anhydrase 1 (CA1) of Homo sapiens (Human).